A 409-amino-acid polypeptide reads, in one-letter code: MPNFKSTAPKAKFAIYNNSNPDSESGFVEFQGYSFGAPVSCSGEAVFTTSLVGYPESMTDPSYKGQILVFTQPLIGNYGVPSGEERDDFNLLKYLESPHIHVRGIVVAEYAWRYSHWTAVESLATWCQRENVTAIGGIDTRAVVQILREQGSSPSTITVQGSFIPKPIKPETDLVKIVSTKKPFFVKALSSVKTPFNVALIDCGVKENIIRCLVERGANVTVFPYDYPITSVANQFDGIFISNGPGDPVQCMESTVPELKKLLETNTLQDLPIFGICLGHQLLALASGGKTIKLGYGNRAHNIPALDLTTGQCHITSQNHGYAVDVDTLPESGFKPFFQNLNDKSNEGMIHVSRPIFSTQFHPEAKGGPRDSAVLFDRYFDNMSQYRALKGPKVKLTLNTSSLATERVF.

The Glutamine amidotransferase type-1 domain occupies 197–389 (NVALIDCGVK…FDNMSQYRAL (193 aa)). C277 (nucleophile) is an active-site residue. Residues H362 and E364 contribute to the active site.

This sequence belongs to the CarA family. As to quaternary structure, heterodimer composed of 2 chains; the small (or glutamine) chain promotes the hydrolysis of glutamine to ammonia, which is used by the large (or ammonia) chain to synthesize carbamoyl phosphate.

It localises to the cytoplasm. The catalysed reaction is hydrogencarbonate + L-glutamine + 2 ATP + H2O = carbamoyl phosphate + L-glutamate + 2 ADP + phosphate + 2 H(+). The enzyme catalyses L-glutamine + H2O = L-glutamate + NH4(+). It functions in the pathway amino-acid biosynthesis; L-arginine biosynthesis; carbamoyl phosphate from bicarbonate: step 1/1. In terms of biological role, small subunit of the arginine-specific carbamoyl phosphate synthase (CPSase). CPSase catalyzes the formation of carbamoyl phosphate from the ammonia moiety of glutamine, carbonate, and phosphate donated by ATP, constituting the first step of 2 biosynthetic pathways, one leading to arginine and/or urea and the other to pyrimidine nucleotides. The small subunit (glutamine amidotransferase) binds and cleaves glutamine to supply the large subunit with the substrate ammonia. The polypeptide is Carbamoyl phosphate synthase arginine-specific small chain (CPA1) (Kluyveromyces lactis (strain ATCC 8585 / CBS 2359 / DSM 70799 / NBRC 1267 / NRRL Y-1140 / WM37) (Yeast)).